Here is a 74-residue protein sequence, read N- to C-terminus: Peptide BmKb1 (74 aa).

The N-terminal stretch at 1–22 (MEIKYLLTVFLVLLIVSDHCQA) is a signal peptide. K40 carries the lysine amide modification. The propeptide occupies 46–74 (DLNGYIDHFKNFRKRDAELEELLSKLPIY).

The protein belongs to the non-disulfide-bridged peptide (NDBP) superfamily. Short antimicrobial peptide (group 4) family. As to expression, expressed by the venom gland.

Its subcellular location is the secreted. The protein localises to the target cell membrane. In terms of biological role, has antibacterial activity against Gram-positive bacteria S.aureus, M.luteus, B.subtilis, and Gram-negative bacteria E.coli, and P.aeruginosa. In Olivierus martensii (Manchurian scorpion), this protein is Peptide BmKb1.